Reading from the N-terminus, the 326-residue chain is Peroxidase 1 (326 aa).

An N-terminal signal peptide occupies residues 1–22; the sequence is MASSRVILALLLAAAAVMASSA. Gln23 carries the pyrrolidone carboxylic acid modification. Disulfide bonds link Cys33–Cys112, Cys66–Cys71, Cys118–Cys322, and Cys196–Cys231. The Proton acceptor role is filled by His64. Residues Asp65, Val68, Gly70, Asp72, and Ser74 each contribute to the Ca(2+) site. 2 N-linked (GlcNAc...) asparagine glycosylation sites follow: Asn82 and Asn153. Pro159 provides a ligand contact to substrate. N-linked (GlcNAc...) asparagine glycosylation is present at Asn164. His189 provides a ligand contact to heme b. Residue Thr190 participates in Ca(2+) binding. N-linked (GlcNAc...) asparagine glycosylation is found at Asn205 and Asn237. Ca(2+)-binding residues include Asp244, Ser247, and Asp252.

It belongs to the peroxidase family. Classical plant (class III) peroxidase subfamily. Ca(2+) is required as a cofactor. It depends on heme b as a cofactor.

The protein localises to the secreted. The catalysed reaction is 2 a phenolic donor + H2O2 = 2 a phenolic radical donor + 2 H2O. Its function is as follows. Removal of H(2)O(2), oxidation of toxic reductants, biosynthesis and degradation of lignin, suberization, auxin catabolism, response to environmental stresses such as wounding, pathogen attack and oxidative stress. These functions might be dependent on each isozyme/isoform in each plant tissue. The sequence is that of Peroxidase 1 (PRX74) from Oryza sativa subsp. japonica (Rice).